The primary structure comprises 240 residues: UDP-2,3-diacylglucosamine hydrolase (240 aa).

Residues Asp-8, His-10, Asp-41, Asn-79, and His-114 each contribute to the Mn(2+) site. 79-80 (NR) lines the substrate pocket. Positions 122, 160, 164, 167, and 195 each coordinate substrate. Mn(2+) is bound by residues His-195 and His-197.

Belongs to the LpxH family. It depends on Mn(2+) as a cofactor.

The protein localises to the cell inner membrane. The catalysed reaction is UDP-2-N,3-O-bis[(3R)-3-hydroxytetradecanoyl]-alpha-D-glucosamine + H2O = 2-N,3-O-bis[(3R)-3-hydroxytetradecanoyl]-alpha-D-glucosaminyl 1-phosphate + UMP + 2 H(+). The protein operates within glycolipid biosynthesis; lipid IV(A) biosynthesis; lipid IV(A) from (3R)-3-hydroxytetradecanoyl-[acyl-carrier-protein] and UDP-N-acetyl-alpha-D-glucosamine: step 4/6. Functionally, hydrolyzes the pyrophosphate bond of UDP-2,3-diacylglucosamine to yield 2,3-diacylglucosamine 1-phosphate (lipid X) and UMP by catalyzing the attack of water at the alpha-P atom. Involved in the biosynthesis of lipid A, a phosphorylated glycolipid that anchors the lipopolysaccharide to the outer membrane of the cell. In Serratia proteamaculans (strain 568), this protein is UDP-2,3-diacylglucosamine hydrolase.